A 725-amino-acid chain; its full sequence is Consortin (725 aa).

Disordered regions lie at residues 1–72 (MDDS…LNNN), 103–124 (GKDK…AKKI), 296–353 (LLVS…SLSV), 375–397 (TQSS…CEDD), and 485–510 (QQPD…ENVL). Topologically, residues 1 to 664 (MDDSDTPTYY…LDQDEVGGGS (664 aa)) are cytoplasmic. Residues 63-72 (VSEQDSLNNN) show a composition bias toward polar residues. The span at 109–121 (PGKRSPRSKKGTA) shows a compositional bias: basic residues. Basic and acidic residues predominate over residues 300–314 (EDPKEGGATTKESES). Composition is skewed to polar residues over residues 343–353 (DVQTDSPSLSV) and 375–388 (TQSS…SGPD). The chain crosses the membrane as a helical span at residues 665–685 (CILLVLLCIATVFLSVGGTAL). Topologically, residues 686–725 (YCTFGDMESPVCTDFADNMDFYYTKLLQGVAELKHWIYLS) are extracellular.

This sequence belongs to the CNST family. Interacts with connexins GJA1/CX43, GJB1/CX32, GJB2/CX26, GJB3/CX31, GJB6/CX30 and GJC1/CX45. Also interacts with GGA1 and GGA2. Does not interact with PANX1.

It is found in the cell membrane. It localises to the golgi apparatus. The protein resides in the trans-Golgi network membrane. Its subcellular location is the cytoplasmic vesicle. The protein localises to the secretory vesicle. Functionally, required for targeting of connexins to the plasma membrane. The polypeptide is Consortin (CNST) (Homo sapiens (Human)).